The primary structure comprises 498 residues: ATP synthase subunit beta, chloroplastic (498 aa).

172 to 179 (GGAGVGKT) contacts ATP.

It belongs to the ATPase alpha/beta chains family. As to quaternary structure, F-type ATPases have 2 components, CF(1) - the catalytic core - and CF(0) - the membrane proton channel. CF(1) has five subunits: alpha(3), beta(3), gamma(1), delta(1), epsilon(1). CF(0) has four main subunits: a(1), b(1), b'(1) and c(9-12).

It localises to the plastid. The protein resides in the chloroplast thylakoid membrane. The catalysed reaction is ATP + H2O + 4 H(+)(in) = ADP + phosphate + 5 H(+)(out). Its function is as follows. Produces ATP from ADP in the presence of a proton gradient across the membrane. The catalytic sites are hosted primarily by the beta subunits. This is ATP synthase subunit beta, chloroplastic from Castanea sativa (Sweet chestnut).